Consider the following 94-residue polypeptide: Integration host factor subunit beta (94 aa).

Belongs to the bacterial histone-like protein family. In terms of assembly, heterodimer of an alpha and a beta chain.

In terms of biological role, this protein is one of the two subunits of integration host factor, a specific DNA-binding protein that functions in genetic recombination as well as in transcriptional and translational control. This chain is Integration host factor subunit beta, found in Roseobacter denitrificans (strain ATCC 33942 / OCh 114) (Erythrobacter sp. (strain OCh 114)).